The following is a 130-amino-acid chain: Mediator of RNA polymerase II transcription subunit 31 (130 aa).

The protein belongs to the Mediator complex subunit 31 family. Component of the Mediator complex.

Its subcellular location is the nucleus. Component of the Mediator complex, a coactivator involved in the regulated transcription of nearly all RNA polymerase II-dependent genes. Mediator functions as a bridge to convey information from gene-specific regulatory proteins to the basal RNA polymerase II transcription machinery. Mediator is recruited to promoters by direct interactions with regulatory proteins and serves as a scaffold for the assembly of a functional preinitiation complex with RNA polymerase II and the general transcription factors. The polypeptide is Mediator of RNA polymerase II transcription subunit 31 (SOH1) (Candida glabrata (strain ATCC 2001 / BCRC 20586 / JCM 3761 / NBRC 0622 / NRRL Y-65 / CBS 138) (Yeast)).